The primary structure comprises 398 residues: MASINEFIQKYQAIQKDFEEIIENPDWRAECRKKKINVVSKGKKVNFKYDNRCKLKTAWTRSCRGVCVEFDTETGKPIRKPIYSFNKFDNRHNEPDFYNNLLECEAVVLANKFDGSFVRIWYDGVEEKFVTATLGTLSADDKFLVAETMMDQRIARHLKGNPYDCLLAELITPKNIIVTDYNGKSFLTPLSIVSHVDGLPRWSTLRKVVPDMFMENGLPYYCRFTTIETLENDLKEFEQMTIDNPDVYGRIPEGVCVYQCSLKDGLVDVATPMSKIKRDEYVSVHGKPSGKKEEKSKPPAILGRAVTDPKFLQQHAILKFIYDDIEEKTEDEFFMVLENWYENYKTIDRDTNVKKELFGKKDHDKYGRTFRDLLLEIDNKGRTKLEQFFCRYGPQWYQ.

This is an uncharacterized protein from Ostreid herpesvirus 1 (isolate France) (OsHV-1).